The following is a 274-amino-acid chain: Diaminopimelate epimerase (274 aa).

Substrate is bound by residues asparagine 11, glutamine 44, and asparagine 64. Cysteine 73 (proton donor) is an active-site residue. Substrate-binding positions include 74–75 (GN), asparagine 157, asparagine 190, and 208–209 (ER). Cysteine 217 functions as the Proton acceptor in the catalytic mechanism. 218-219 (GS) provides a ligand contact to substrate.

It belongs to the diaminopimelate epimerase family. Homodimer.

The protein localises to the cytoplasm. It catalyses the reaction (2S,6S)-2,6-diaminopimelate = meso-2,6-diaminopimelate. It participates in amino-acid biosynthesis; L-lysine biosynthesis via DAP pathway; DL-2,6-diaminopimelate from LL-2,6-diaminopimelate: step 1/1. Functionally, catalyzes the stereoinversion of LL-2,6-diaminopimelate (L,L-DAP) to meso-diaminopimelate (meso-DAP), a precursor of L-lysine and an essential component of the bacterial peptidoglycan. The chain is Diaminopimelate epimerase from Erwinia tasmaniensis (strain DSM 17950 / CFBP 7177 / CIP 109463 / NCPPB 4357 / Et1/99).